Consider the following 184-residue polypeptide: Rhox homeobox family member 1 (184 aa).

Residues 26 to 104 are disordered; it reads QLGAASSAEG…GPQPENMQPR (79 aa). Positions 88-99 are enriched in low complexity; that stretch reads PAQAAMEGPQPE. Residues 103–162 constitute a DNA-binding region (homeobox); it reads PRTRRTKFTLLQVEELESVFRHTQYPDVPTRRELAENLGVTEDKVRVWFKNKRARCRRHQ. Residues 155–164 carry the Nuclear localization signal motif; it reads RARCRRHQRE.

The protein belongs to the paired-like homeobox family. PEPP subfamily. In terms of assembly, does not interact with itself. As to expression, ovary, testis and epididymis. Also detected in the prostate and the mammary gland. Expressed in many tumor cell lines derived from acute lymphocytic leukemia, prostate, endometrial adenocarcinoma, melanoma, bladder carcinoma, colon carcinoma, erythroleukemia and breast carcinoma. Not expressed in placenta. In testis, mainly expressed in germ cells, but also detected in somatic cells such as Sertoli cells, Leydig cells and peritubular cells.

The protein localises to the nucleus. Its function is as follows. Transcription factor maybe involved in reproductive processes. Modulates expression of target genes encoding proteins involved in processes relevant to spermatogenesis. The protein is Rhox homeobox family member 1 of Homo sapiens (Human).